A 112-amino-acid chain; its full sequence is Small ribosomal subunit protein uS17 (112 aa).

This sequence belongs to the universal ribosomal protein uS17 family. As to quaternary structure, part of the 30S ribosomal subunit.

Functionally, one of the primary rRNA binding proteins, it binds specifically to the 5'-end of 16S ribosomal RNA. The protein is Small ribosomal subunit protein uS17 of Thermotoga neapolitana (strain ATCC 49049 / DSM 4359 / NBRC 107923 / NS-E).